We begin with the raw amino-acid sequence, 116 residues long: Large ribosomal subunit protein bL20 (116 aa).

This sequence belongs to the bacterial ribosomal protein bL20 family.

Functionally, binds directly to 23S ribosomal RNA and is necessary for the in vitro assembly process of the 50S ribosomal subunit. It is not involved in the protein synthesizing functions of that subunit. The chain is Large ribosomal subunit protein bL20 from Nautilia profundicola (strain ATCC BAA-1463 / DSM 18972 / AmH).